Consider the following 165-residue polypeptide: MAKVEQNDGLVEKLVSVDRVSKVVKGGRIFSFTALTVVGDGNGRVGFGRGKAREVPAAIQKALEAAKRNMITVDLDGATLQHPIIARHGASKVYMQPANEGTGVIAGGAVRAVLESAGVENVLTKCYGSTNPTNVVRATFNGLRDMSSPEKAAAKRGKSVDEILG.

Positions 10-73 (LVEKLVSVDR…EAAKRNMITV (64 aa)) constitute an S5 DRBM domain.

It belongs to the universal ribosomal protein uS5 family. In terms of assembly, part of the 30S ribosomal subunit. Contacts proteins S4 and S8.

In terms of biological role, with S4 and S12 plays an important role in translational accuracy. Located at the back of the 30S subunit body where it stabilizes the conformation of the head with respect to the body. The protein is Small ribosomal subunit protein uS5 of Psychrobacter sp. (strain PRwf-1).